The sequence spans 123 residues: Defensin beta 118 (123 aa).

The first 19 residues, Met1–Pro19, serve as a signal peptide directing secretion. Disulfide bonds link Cys27-Cys54, Cys34-Cys48, and Cys38-Cys55. Positions Val65–Ser123 are excised as a propeptide. The segment covering Lys100 to Arg110 has biased composition (basic and acidic residues). A disordered region spans residues Lys100–Ser123. Residues Thr112–Ser123 show a composition bias toward polar residues.

The protein belongs to the beta-defensin family. The three-dimensional structure formed by the three intramolecular disulfide bridges is indispensable for antimicrobial activity.

The protein resides in the secreted. Functionally, host defense peptide that exhibits antimicrobial activity against both Gram-negative bacteria, such as E.coli and S.typhimurium, and Gram-positive bacteria, such as S.aureus and B.subtilis. Inhibits cell adhesion of E.coli on intestinal epithelial enterocytes. Causes rapid permeabilization of both the outer and inner membrane of E.coli, leading to morphological alterations on the bacterial surface. Binds to bacterial lipopolysaccharides (LPS) with high affinity, and may thereby be involved in immunoregulation through LPS neutralization. May contribute to epididymal innate immunity and protect the sperm against attack by microorganisms. This is Defensin beta 118 (DEFB118) from Pan troglodytes (Chimpanzee).